A 118-amino-acid chain; its full sequence is Cell division topological specificity factor (118 aa).

Positions 86–118 (RSQAKAVSSQENGASSQEAVSSQESVSTPGAME) are disordered. The span at 99–112 (ASSQEAVSSQESVS) shows a compositional bias: low complexity.

It belongs to the MinE family.

Prevents the cell division inhibition by proteins MinC and MinD at internal division sites while permitting inhibition at polar sites. This ensures cell division at the proper site by restricting the formation of a division septum at the midpoint of the long axis of the cell. The chain is Cell division topological specificity factor from Prochlorococcus marinus (strain MIT 9313).